A 579-amino-acid polypeptide reads, in one-letter code: MSSCRYNGGVMRPLSNLSASRRNLHEMDSEAQPLQPPASVGGGGGASSPSAAAAAAAAVSSSAPEIVVSKPEHNNSNNLALYGTGGGGSTGGGGGGGGSGHGSSSGTKSSKKKNQNIGYKLGHRRALFEKRKRLSDYALIFGMFGIVVMVIETELSWGAYDKASLYSLALKCLISLSTIILLGLIIVYHAREIQLFMVDNGADDWRIAMTYERIFFICLEILVCAIHPIPGNYTFTWTARLAFSYAPSTTTADVDIILSIPMFLRLYLIARVMLLHSKLFTDASSRSIGALNKINFNTRFVMKTLMTICPGTVLLVFSISLWIIAAWTVRACERYHDQQDVTSNFLGAMWLISITFLSIGYGDMVPNTYCGKGVCLLTGIMGAGCTALVVAVVARKLELTKAEKHVHNFMMDTQLTKRVKNAAANVLRETWLIYKNTKLVKKIDHAKVRKHQRKFLQAIHQLRSVKMEQRKLNDQANTLVDLAKTQNIMYDMISDLNERSEDFEKRIVTLETKLETLIGSIHALPGLISQTIRQQQRDFIEAQMESYDKHVTYNAERSRSSSRRRRSSSTAPPTSSESS.

Disordered stretches follow at residues 1 to 54 (MSSC…AAAA) and 90 to 115 (TGGGGGGGGSGHGSSSGTKSSKKKNQ). The span at 90 to 103 (TGGGGGGGGSGHGS) shows a compositional bias: gly residues. Residues 138–158 (ALIFGMFGIVVMVIETELSWG) traverse the membrane as a helical segment. Tyr-160 carries the post-translational modification Phosphotyrosine. The helical transmembrane segment at 168-188 (LALKCLISLSTIILLGLIIVY) threads the bilayer. Residues 214 to 234 (IFFICLEILVCAIHPIPGNYT) traverse the membrane as a helical segment. The chain crosses the membrane as a helical span at residues 256–276 (IILSIPMFLRLYLIARVMLLH). A helical membrane pass occupies residues 305–325 (LMTICPGTVLLVFSISLWIIA). The pore-forming intramembrane region spans 345-365 (FLGAMWLISITFLSIGYGDMV). Residues 374–394 (VCLLTGIMGAGCTALVVAVVA) form a helical membrane-spanning segment. The calmodulin-binding stretch occupies residues 412 to 488 (DTQLTKRVKN…LVDLAKTQNI (77 aa)). The tract at residues 551–579 (VTYNAERSRSSSRRRRSSSTAPPTSSESS) is disordered. Residues 568–579 (SSTAPPTSSESS) are compositionally biased toward low complexity.

This sequence belongs to the potassium channel KCNN family. KCa2.2/KCNN2 subfamily. In terms of assembly, homodimer. Heteromultimer with KCNN1 and KCNN3. The complex is composed of 4 channel subunits each of which binds to a calmodulin subunit which regulates the channel activity through calcium-binding. Interacts (via N-terminal domain) with MPP2. Expressed in atrial myocytes (at protein level). Widely expressed.

The protein localises to the membrane. It is found in the cytoplasm. It localises to the myofibril. The protein resides in the sarcomere. Its subcellular location is the z line. The enzyme catalyses K(+)(in) = K(+)(out). With respect to regulation, inhibited by bee venom neurotoxin apamin. Inhibited by UCL 1684 and tetraethylammonium (TEA). In terms of biological role, small conductance calcium-activated potassium channel that mediates the voltage-independent transmembrane transfer of potassium across the cell membrane through a constitutive interaction with calmodulin which binds the intracellular calcium allowing its opening. The current is characterized by a voltage-independent activation, an intracellular calcium concentration increase-dependent activation and a single-channel conductance of about 3 picosiemens. Also presents an inwardly rectifying current, thus reducing its already small outward conductance of potassium ions, which is particularly the case when the membrane potential displays positive values, above + 20 mV. The inward rectification could be due to a blockade of the outward current by intracellular divalent cations such as calcium and magnesium and could also be due to an intrinsic property of the channel pore, independent of intracellular divalent ions. There are three positively charged amino acids in the S6 transmembrane domain, close to the pore, that collectively control the conductance and rectification through an electrostatic mechanism. Additionally, electrostatic contributions from these residues also play an important role in determining the intrinsic open probability of the channel in the absence of calcium, affecting the apparent calcium affinity for activation. Forms an heteromeric complex with calmodulin, which is constitutively associated in a calcium-independent manner. Channel opening is triggered when calcium binds the calmodulin resulting in a rotary movement leading to the formation of the dimeric complex to open the gate. Plays a role in the repolarization phase of cardiac action potential. This Homo sapiens (Human) protein is Small conductance calcium-activated potassium channel protein 2.